The sequence spans 407 residues: 1-deoxy-D-xylulose 5-phosphate reductoisomerase (407 aa).

NADPH contacts are provided by threonine 27, glycine 28, serine 29, isoleucine 30, alanine 53, arginine 54, asparagine 55, and asparagine 140. Residue lysine 141 participates in 1-deoxy-D-xylulose 5-phosphate binding. Glutamate 142 provides a ligand contact to NADPH. Residue aspartate 166 coordinates Mn(2+). Positions 167, 168, 192, and 215 each coordinate 1-deoxy-D-xylulose 5-phosphate. Residue glutamate 168 participates in Mn(2+) binding. NADPH is bound at residue glycine 221. 1-deoxy-D-xylulose 5-phosphate is bound by residues serine 228, asparagine 233, lysine 234, and glutamate 237. Residue glutamate 237 participates in Mn(2+) binding.

It belongs to the DXR family. Mg(2+) is required as a cofactor. Requires Mn(2+) as cofactor.

The enzyme catalyses 2-C-methyl-D-erythritol 4-phosphate + NADP(+) = 1-deoxy-D-xylulose 5-phosphate + NADPH + H(+). The protein operates within isoprenoid biosynthesis; isopentenyl diphosphate biosynthesis via DXP pathway; isopentenyl diphosphate from 1-deoxy-D-xylulose 5-phosphate: step 1/6. Its function is as follows. Catalyzes the NADPH-dependent rearrangement and reduction of 1-deoxy-D-xylulose-5-phosphate (DXP) to 2-C-methyl-D-erythritol 4-phosphate (MEP). In Oleidesulfovibrio alaskensis (strain ATCC BAA-1058 / DSM 17464 / G20) (Desulfovibrio alaskensis), this protein is 1-deoxy-D-xylulose 5-phosphate reductoisomerase.